Consider the following 100-residue polypeptide: Urease subunit gamma (100 aa).

The protein belongs to the urease gamma subunit family. In terms of assembly, heterotrimer of UreA (gamma), UreB (beta) and UreC (alpha) subunits. Three heterotrimers associate to form the active enzyme.

Its subcellular location is the cytoplasm. The catalysed reaction is urea + 2 H2O + H(+) = hydrogencarbonate + 2 NH4(+). It functions in the pathway nitrogen metabolism; urea degradation; CO(2) and NH(3) from urea (urease route): step 1/1. The sequence is that of Urease subunit gamma from Picosynechococcus sp. (strain ATCC 27264 / PCC 7002 / PR-6) (Agmenellum quadruplicatum).